Reading from the N-terminus, the 52-residue chain is Defensin-like protein 2B (52 aa).

4 disulfides stabilise this stretch: C4–C52, C16–C37, C22–C46, and C26–C48.

As to quaternary structure, forms oligomers in its native state.

Possesses antifungal activity sensitive to inorganic cations. The sequence is that of Defensin-like protein 2B from Sinapis alba (White mustard).